The chain runs to 481 residues: MSDSIETKNMGRIVQIIGPVLDIVFAKGQVPNIYNALTIRAKNSAGTEMAVTCEVQQLLGDNCVRAVSMNPTEGLMRGMEVVDTGKPLSVPVGKVTLGRIFNVLGEPVDNMGNVKVEETLPIHRTAPAFVDLDTRLSIFETGIKVVDLLAPYRRGGKIGLFGGAGVGKTVLIMELINNIAKAHGGVSVFAGVGERTREGNDLYTEMKESGVIVEKNLSDSKVALVYGQMNEPPGARMRVALTALTMAEYFRDVNKQDVLFFIDNIFRFVQAGAEVSALLGRMPSAVGYQPTLATEMGGLQERITSTKDGSITSIQAVYVPADDLTDPAPATTFAHLDATTVLSRNLAAKGIYPAVDPLESTSTMLQPWILGEKHYDSAQSVKKTLQRYKELQDIIAILGLDELSEEDRLIVARARKIERFLSQPFFVAEVFTGSPGKYVSLAETIEGFGKIFAGELDDLPEQAFYLVGNITEAISKAASLK.

162 to 169 is an ATP binding site; that stretch reads GGAGVGKT.

This sequence belongs to the ATPase alpha/beta chains family. As to quaternary structure, F-type ATPases have 2 components, F(1) - the catalytic core - and F(0) - the membrane proton channel. F(1) has five subunits: alpha(3), beta(3), gamma(1), delta(1), epsilon(1). F(0) has four main subunits: a(1), b(1), b'(1) and c(10-14). The alpha and beta chains form an alternating ring which encloses part of the gamma chain. F(1) is attached to F(0) by a central stalk formed by the gamma and epsilon chains, while a peripheral stalk is formed by the delta, b and b' chains.

It is found in the plastid. Its subcellular location is the chloroplast thylakoid membrane. The enzyme catalyses ATP + H2O + 4 H(+)(in) = ADP + phosphate + 5 H(+)(out). F(1)F(0) ATP synthase produces ATP from ADP in the presence of a proton or sodium gradient. F-type ATPases consist of two structural domains, F(1) containing the extramembraneous catalytic core and F(0) containing the membrane proton channel, linked together by a central stalk and a peripheral stalk. During catalysis, ATP synthesis in the catalytic domain of F(1) is coupled via a rotary mechanism of the central stalk subunits to proton translocation. Its function is as follows. Produces ATP from ADP in the presence of a proton gradient across the membrane. The catalytic sites are hosted primarily by the beta subunits. This Chlamydomonas reinhardtii (Chlamydomonas smithii) protein is ATP synthase subunit beta, chloroplastic.